Consider the following 70-residue polypeptide: Brevinin-1PLc (70 aa).

The signal sequence occupies residues M1–C22. Positions E23–E44 are excised as a propeptide. C64 and C70 are oxidised to a cystine.

Expressed by the skin glands.

It is found in the secreted. Its function is as follows. Antimicrobial activity against the Gram-negative bacterium E.coli, the Gram-positive bacterium S.aureus and the yeast C.albicans. This chain is Brevinin-1PLc, found in Lithobates palustris (Pickerel frog).